We begin with the raw amino-acid sequence, 88 residues long: Cell division topological specificity factor (88 aa).

The protein belongs to the MinE family.

Its function is as follows. Prevents the cell division inhibition by proteins MinC and MinD at internal division sites while permitting inhibition at polar sites. This ensures cell division at the proper site by restricting the formation of a division septum at the midpoint of the long axis of the cell. The sequence is that of Cell division topological specificity factor from Clostridium novyi (strain NT).